The sequence spans 540 residues: Probable pectinesterase/pectinesterase inhibitor 60 (540 aa).

A signal peptide spans 1-31 (MNIMMVQNISFLSLHLLLILLLCLRPLTTVA). Residues 32–185 (DGNSTNIDGW…SHLISNCLAV (154 aa)) form a pectinesterase inhibitor 60 region. N-linked (GlcNAc...) asparagine glycans are attached at residues N34, N91, N95, N120, N161, and N195. The tract at residues 225–526 (NLVVAKDGSG…FSVGKFIAGT (302 aa)) is pectinesterase 60. Substrate is bound by residues T302 and Q332. D355 functions as the Proton donor; for pectinesterase activity in the catalytic mechanism. Cysteines 369 and 389 form a disulfide. D376 (nucleophile; for pectinesterase activity) is an active-site residue. Positions 444 and 446 each coordinate substrate.

The protein in the N-terminal section; belongs to the PMEI family. In the C-terminal section; belongs to the pectinesterase family. In terms of tissue distribution, expressed in siliques.

It is found in the secreted. The protein localises to the cell wall. The enzyme catalyses [(1-&gt;4)-alpha-D-galacturonosyl methyl ester](n) + n H2O = [(1-&gt;4)-alpha-D-galacturonosyl](n) + n methanol + n H(+). It functions in the pathway glycan metabolism; pectin degradation; 2-dehydro-3-deoxy-D-gluconate from pectin: step 1/5. Acts in the modification of cell walls via demethylesterification of cell wall pectin. In Arabidopsis thaliana (Mouse-ear cress), this protein is Probable pectinesterase/pectinesterase inhibitor 60 (PME60).